The chain runs to 204 residues: Putative 3-methyladenine DNA glycosylase (204 aa).

The protein belongs to the DNA glycosylase MPG family.

The chain is Putative 3-methyladenine DNA glycosylase from Mycobacterium sp. (strain KMS).